A 178-amino-acid polypeptide reads, in one-letter code: Large ribosomal subunit protein uL10 (178 aa).

This sequence belongs to the universal ribosomal protein uL10 family. Part of the ribosomal stalk of the 50S ribosomal subunit. The N-terminus interacts with L11 and the large rRNA to form the base of the stalk. The C-terminus forms an elongated spine to which L12 dimers bind in a sequential fashion forming a multimeric L10(L12)X complex.

Functionally, forms part of the ribosomal stalk, playing a central role in the interaction of the ribosome with GTP-bound translation factors. In Thermosynechococcus vestitus (strain NIES-2133 / IAM M-273 / BP-1), this protein is Large ribosomal subunit protein uL10.